We begin with the raw amino-acid sequence, 463 residues long: MELRLYDTLSREKRTFTPLDPSNVRMYVCGPTVYDFAHIGNARPVIVFDVLFRLLRHVYGEAHVKYVRNITDVDDKINDRAARDFPGLPLNEAIRKVTEQTEKQFHDDVDALGCLRPTVEPRATEHIGEMRDIIDRLIAGGFAYVAADHVLFSPQAMNAKDGVLPRYGALANRSLDEMIAGARVDVAPYKRDATDFVLWKPSKPGEPSWPSPGGIAVQGRPGWHIECSAMSWKHLGERFDIHGGGIDLVFPHHENEVAQSCCAFHTERMAETWMHNGFLQVEGEKMSKSLGNFVTIRELLATDKFGGKRWDGAVLRLAMLKTHYRSPIDWTVEALHEAEKAIYDWSEFTKDATPAPCDEVIDALADDLNTPKMIAELHGLRRVGKPAELLGALQLLGIGRVFRQTIEIDVNAQALIEARTAARARKDFKESDRIRDELAAMGVVLKDGKDADGKPVTTWEIAR.

Residue Cys-29 coordinates Zn(2+). The 'HIGH' region signature appears at 31–41; that stretch reads PTVYDFAHIGN. Zn(2+) is bound by residues Cys-227, His-252, and Glu-256. Residues 285-289 carry the 'KMSKS' region motif; sequence KMSKS. An ATP-binding site is contributed by Lys-288.

This sequence belongs to the class-I aminoacyl-tRNA synthetase family. Monomer. The cofactor is Zn(2+).

The protein resides in the cytoplasm. It carries out the reaction tRNA(Cys) + L-cysteine + ATP = L-cysteinyl-tRNA(Cys) + AMP + diphosphate. The chain is Cysteine--tRNA ligase from Rhodopseudomonas palustris (strain BisA53).